Reading from the N-terminus, the 244-residue chain is 23S rRNA (guanosine-2'-O-)-methyltransferase RlmB (244 aa).

S-adenosyl-L-methionine-binding residues include G196, I216, and L225.

It belongs to the class IV-like SAM-binding methyltransferase superfamily. RNA methyltransferase TrmH family. RlmB subfamily. Homodimer.

Its subcellular location is the cytoplasm. The enzyme catalyses guanosine(2251) in 23S rRNA + S-adenosyl-L-methionine = 2'-O-methylguanosine(2251) in 23S rRNA + S-adenosyl-L-homocysteine + H(+). In terms of biological role, specifically methylates the ribose of guanosine 2251 in 23S rRNA. The sequence is that of 23S rRNA (guanosine-2'-O-)-methyltransferase RlmB from Photorhabdus laumondii subsp. laumondii (strain DSM 15139 / CIP 105565 / TT01) (Photorhabdus luminescens subsp. laumondii).